Consider the following 81-residue polypeptide: Toxin F-VIII (81 aa).

A signal peptide spans 1–21 (MKTLLLTLLVVTIVCLDLAST). Disulfide bonds link Cys-24-Cys-43, Cys-38-Cys-60, Cys-62-Cys-73, and Cys-74-Cys-79.

The protein belongs to the three-finger toxin family. Short-chain subfamily. Orphan group XI sub-subfamily. As to expression, expressed by the venom gland.

It localises to the secreted. In terms of biological role, is cytotoxic against A549 cells (LC(50)=106 ug/ml). This Dendroaspis angusticeps (Eastern green mamba) protein is Toxin F-VIII.